The following is a 140-amino-acid chain: Putative transcription elongation factor S-II-like protein 349L (140 aa).

A TFIIS-type zinc finger spans residues 100–139 (GAIKCKCGSERVFSFSKQTRSGDESTSVFALCSSCKSKWV). Zn(2+)-binding residues include Cys-104, Cys-106, Cys-131, and Cys-134.

This sequence belongs to the IIV-6 349L family.

The chain is Putative transcription elongation factor S-II-like protein 349L from Acheta domesticus (House cricket).